Consider the following 159-residue polypeptide: Phosphopantetheine adenylyltransferase (159 aa).

Ser9 contributes to the substrate binding site. ATP-binding positions include 9 to 10 (SF) and His17. Residues Lys41, Leu73, and Lys87 each contribute to the substrate site. ATP is bound by residues 88–90 (GLR), Glu98, and 123–129 (YSYLSSS).

This sequence belongs to the bacterial CoaD family. In terms of assembly, homohexamer. The cofactor is Mg(2+).

It localises to the cytoplasm. The enzyme catalyses (R)-4'-phosphopantetheine + ATP + H(+) = 3'-dephospho-CoA + diphosphate. The protein operates within cofactor biosynthesis; coenzyme A biosynthesis; CoA from (R)-pantothenate: step 4/5. Its function is as follows. Reversibly transfers an adenylyl group from ATP to 4'-phosphopantetheine, yielding dephospho-CoA (dPCoA) and pyrophosphate. The chain is Phosphopantetheine adenylyltransferase from Clostridium botulinum (strain Eklund 17B / Type B).